A 289-amino-acid chain; its full sequence is tRNA pseudouridine synthase B (289 aa).

Asp38 acts as the Nucleophile in catalysis.

Belongs to the pseudouridine synthase TruB family. Type 1 subfamily.

The catalysed reaction is uridine(55) in tRNA = pseudouridine(55) in tRNA. In terms of biological role, responsible for synthesis of pseudouridine from uracil-55 in the psi GC loop of transfer RNAs. This chain is tRNA pseudouridine synthase B, found in Clostridium acetobutylicum (strain ATCC 824 / DSM 792 / JCM 1419 / IAM 19013 / LMG 5710 / NBRC 13948 / NRRL B-527 / VKM B-1787 / 2291 / W).